The primary structure comprises 493 residues: Glutamyl-tRNA(Gln) amidotransferase subunit A (493 aa).

Residues Lys79 and Ser159 each act as charge relay system in the active site. Catalysis depends on Ser183, which acts as the Acyl-ester intermediate.

It belongs to the amidase family. GatA subfamily. As to quaternary structure, heterotrimer of A, B and C subunits.

It catalyses the reaction L-glutamyl-tRNA(Gln) + L-glutamine + ATP + H2O = L-glutaminyl-tRNA(Gln) + L-glutamate + ADP + phosphate + H(+). Its function is as follows. Allows the formation of correctly charged Gln-tRNA(Gln) through the transamidation of misacylated Glu-tRNA(Gln) in organisms which lack glutaminyl-tRNA synthetase. The reaction takes place in the presence of glutamine and ATP through an activated gamma-phospho-Glu-tRNA(Gln). The polypeptide is Glutamyl-tRNA(Gln) amidotransferase subunit A (Brucella suis biovar 1 (strain 1330)).